Consider the following 492-residue polypeptide: N-succinylglutamate 5-semialdehyde dehydrogenase (492 aa).

Residue 220 to 225 (GSASTG) participates in NAD(+) binding. Active-site residues include Glu-243 and Cys-277.

This sequence belongs to the aldehyde dehydrogenase family. AstD subfamily.

The catalysed reaction is N-succinyl-L-glutamate 5-semialdehyde + NAD(+) + H2O = N-succinyl-L-glutamate + NADH + 2 H(+). It functions in the pathway amino-acid degradation; L-arginine degradation via AST pathway; L-glutamate and succinate from L-arginine: step 4/5. In terms of biological role, catalyzes the NAD-dependent reduction of succinylglutamate semialdehyde into succinylglutamate. This Salmonella typhimurium (strain LT2 / SGSC1412 / ATCC 700720) protein is N-succinylglutamate 5-semialdehyde dehydrogenase.